The following is a 327-amino-acid chain: GMP reductase (327 aa).

Cys175 acts as the Thioimidate intermediate in catalysis. 204-227 (IIADGGIRTHGDIAKSIRFGASMV) is a binding site for NADP(+).

This sequence belongs to the IMPDH/GMPR family. GuaC type 2 subfamily.

It catalyses the reaction IMP + NH4(+) + NADP(+) = GMP + NADPH + 2 H(+). Its function is as follows. Catalyzes the irreversible NADPH-dependent deamination of GMP to IMP. It functions in the conversion of nucleobase, nucleoside and nucleotide derivatives of G to A nucleotides, and in maintaining the intracellular balance of A and G nucleotides. The chain is GMP reductase from Oceanobacillus iheyensis (strain DSM 14371 / CIP 107618 / JCM 11309 / KCTC 3954 / HTE831).